Here is a 146-residue protein sequence, read N- to C-terminus: Hemoglobin subunit beta (146 aa).

In terms of domain architecture, Globin spans 2–146 (HWTAEEKQLI…VAHALARKYH (145 aa)). Heme b is bound by residues H63 and H92.

Belongs to the globin family. Heterotetramer of two alpha chains and two beta chains. As to expression, red blood cells.

Its function is as follows. Involved in oxygen transport from the lung to the various peripheral tissues. The chain is Hemoglobin subunit beta (HBB) from Aquila chrysaetos (Golden eagle).